We begin with the raw amino-acid sequence, 122 residues long: UPF0102 protein CPF_1959 (122 aa).

Belongs to the UPF0102 family.

The polypeptide is UPF0102 protein CPF_1959 (Clostridium perfringens (strain ATCC 13124 / DSM 756 / JCM 1290 / NCIMB 6125 / NCTC 8237 / Type A)).